A 513-amino-acid polypeptide reads, in one-letter code: V-type proton ATPase subunit B, kidney isoform (513 aa).

The segment covering 1 to 18 has biased composition (polar residues); that stretch reads MATTVDSRSSGFTGNSCD. Residues 1–21 are disordered; it reads MATTVDSRSSGFTGNSCDPGT. ATP is bound at residue Arg-394. Positions 510–513 match the PDZ-binding motif; that stretch reads DTAL.

The protein belongs to the ATPase alpha/beta chains family. As to quaternary structure, V-ATPase is a heteromultimeric enzyme made up of two complexes: the ATP-hydrolytic V1 complex and the proton translocation V0 complex. The V1 complex consists of three catalytic AB heterodimers that form a heterohexamer, three peripheral stalks each consisting of EG heterodimers, one central rotor including subunits D and F, and the regulatory subunits C and H. The proton translocation complex V0 consists of the proton transport subunit a, a ring of proteolipid subunits c9c'', rotary subunit d, subunits e and f, and the accessory subunits ATP6AP1/Ac45 and ATP6AP2/PRR. Forms a complex with NHERF1 and SCL4A7. In terms of tissue distribution, highly expressed in the kidney; found in early distal nephron, encompassing thick ascending limbs and distal convoluted tubules and in the alpha-intercalated cells of the cortical collecting ducts (at protein level). Expressed in the olfactory epithelium (at protein level). Expressed at lower levels in the testis.

It localises to the apical cell membrane. The protein resides in the basolateral cell membrane. Functionally, non-catalytic subunit of the V1 complex of vacuolar(H+)-ATPase (V-ATPase), a multisubunit enzyme composed of a peripheral complex (V1) that hydrolyzes ATP and a membrane integral complex (V0) that translocates protons. V-ATPase is responsible for acidifying and maintaining the pH of intracellular compartments and in some cell types, is targeted to the plasma membrane, where it is responsible for acidifying the extracellular environment. Essential for the proper assembly and activity of V-ATPase. In renal intercalated cells, mediates secretion of protons (H+) into the urine thereby ensuring correct urinary acidification. Required for optimal olfactory function by mediating the acidification of the nasal olfactory epithelium. The polypeptide is V-type proton ATPase subunit B, kidney isoform (Atp6v1b1) (Mus musculus (Mouse)).